The sequence spans 573 residues: Maestro heat-like repeat-containing protein family member 9 (573 aa).

5 HEAT repeats span residues 118–155, 252–289, 292–328, 357–394, and 418–458; these read LYKLQILKEMLVWMSKDSSYLQERIMVIINKVLRFTVT, PLLTDFVQSLLMKLSSPDDKIASDAASILIFTLEFHAE, TMVSKIVDAIYRQLCDNNCMKDVMLQVITLLTCTSPK, SVAPHVLKTILLILKGKPGEMEDTVTEGKRFSLDITNL, and QYFP…LLNC.

The chain is Maestro heat-like repeat-containing protein family member 9 (MROH9) from Homo sapiens (Human).